The sequence spans 516 residues: Nucleolar complex protein 4 homolog (516 aa).

A run of 3 helical transmembrane segments spans residues 296–316 (SACDVGGAISLLALNGLFILI), 347–367 (FFHLADLFLSSSHLPAYLVAA), and 375–395 (LALTAPPEALLMVLPLICNLL).

It belongs to the CBF/MAK21 family.

It is found in the nucleus membrane. Its subcellular location is the nucleus. The protein resides in the nucleolus. The chain is Nucleolar complex protein 4 homolog (Noc4l) from Rattus norvegicus (Rat).